The following is a 427-amino-acid chain: GPI mannosyltransferase 2 (427 aa).

Helical transmembrane passes span 7 to 27 (LTTVFFTVKLVQYLLVYFAPG), 119 to 139 (ATLLNLVLHYVSVWLLYALTL), 164 to 184 (FLLAPYSEPLSFAFSFLGMLL), 197 to 217 (ITLAWYNWLPYTLSGICFSVA), 247 to 267 (AVLFPCIAGSMMLGIFAYMHY), 318 to 338 (VPNFLFALPNLVILWYSTVYF), 350 to 370 (LVYITRALLLIITFFAHVQII), and 404 to 424 (LYVNWLILWIPLQTVLFACFL).

The protein belongs to the PIGV family.

The protein resides in the endoplasmic reticulum membrane. Its pathway is glycolipid biosynthesis; glycosylphosphatidylinositol-anchor biosynthesis. Its function is as follows. Mannosyltransferase involved in glycosylphosphatidylinositol-anchor biosynthesis. Transfers the second mannose to the glycosylphosphatidylinositol during GPI precursor assembly. The polypeptide is GPI mannosyltransferase 2 (GPI18) (Eremothecium gossypii (strain ATCC 10895 / CBS 109.51 / FGSC 9923 / NRRL Y-1056) (Yeast)).